We begin with the raw amino-acid sequence, 241 residues long: Uridylate kinase (241 aa).

15 to 18 (KLSG) lines the ATP pocket. The tract at residues 23-28 (GTEGFG) is involved in allosteric activation by GTP. UMP is bound at residue G57. Positions 58 and 62 each coordinate ATP. UMP-binding positions include D77 and 138-145 (TGNPFFTT). ATP contacts are provided by T165, F171, and D174.

Belongs to the UMP kinase family. As to quaternary structure, homohexamer.

The protein localises to the cytoplasm. The enzyme catalyses UMP + ATP = UDP + ADP. It functions in the pathway pyrimidine metabolism; CTP biosynthesis via de novo pathway; UDP from UMP (UMPK route): step 1/1. With respect to regulation, allosterically activated by GTP. Inhibited by UTP. Catalyzes the reversible phosphorylation of UMP to UDP. In Escherichia coli O139:H28 (strain E24377A / ETEC), this protein is Uridylate kinase.